We begin with the raw amino-acid sequence, 649 residues long: L-ornithine N(5)-monooxygenase (649 aa).

FAD is bound by residues 72–80 (EKRGHFAWH) and Gln-91. Residue Lys-96 coordinates substrate. Residue Val-157 participates in FAD binding. NADP(+)-binding positions include 289 to 292 (AGQS) and Arg-314. Residues 328–331 (NSAA) and Asn-359 contribute to the substrate site. Position 359–361 (359–361 (NYS)) interacts with NADP(+). A disordered region spans residues 512-547 (AMQSDAVRSGKSSPGSGSDASSTSSQQTLASENSTE). A compositionally biased stretch (low complexity) spans 520-536 (SGKSSPGSGSDASSTSS). The span at 537–547 (QQTLASENSTE) shows a compositional bias: polar residues. Position 569–571 (569–571 (SLL)) interacts with FAD. Ser-572 contacts substrate. The interval 585-611 (LLQRLPRTRRGTASSAATQPAASTVAS) is disordered. Low complexity predominate over residues 596–611 (TASSAATQPAASTVAS).

It belongs to the lysine N(6)-hydroxylase/L-ornithine N(5)-oxygenase family. Homotetramer. Requires FAD as cofactor.

It catalyses the reaction L-ornithine + NADPH + O2 = N(5)-hydroxy-L-ornithine + NADP(+) + H2O. The catalysed reaction is L-ornithine + NADH + O2 = N(5)-hydroxy-L-ornithine + NAD(+) + H2O. It participates in siderophore biosynthesis; ferrichrome biosynthesis. Its function is as follows. Catalyzes the conversion of L-ornithine to N(5)-hydroxyornithine, the first step in the biosynthesis of all hydroxamate-containing siderophores, such as ferrichrome. This chain is L-ornithine N(5)-monooxygenase (SID1), found in Mycosarcoma maydis (Corn smut fungus).